The following is a 365-amino-acid chain: Alpha-keto acid-binding periplasmic protein TakP (365 aa).

The segment at residues 1 to 26 (MDRRSFITKAAVGGAAASALAAPALA) is a signal peptide (tat-type signal). Substrate contacts are provided by residues 99–100 (YY), Gln156, and Arg177. A Na(+)-binding site is contributed by Gln156. Glu214, Trp215, and Glu240 together coordinate Na(+).

It belongs to the bacterial solute-binding protein 7 family. Homodimer. The complex comprises the extracytoplasmic solute receptor protein TakP, and the two transmembrane proteins TakQ and TakM. Post-translationally, predicted to be exported by the Tat system. The position of the signal peptide cleavage has not been experimentally proven.

The protein localises to the periplasm. In terms of biological role, part of the tripartite ATP-independent periplasmic (TRAP) transport system TakPQM involved in the uptake of alpha-keto acids. This protein specifically binds alpha-keto acids including pyruvate, oxobutyrate, oxovalerate and 4-methyl-2-oxovalerate. Ligand-binding affinity increases with the increasing chain length of the aliphatic backbone of the ligand. Is not able to bind alpha-ketoglutarate. The chain is Alpha-keto acid-binding periplasmic protein TakP from Cereibacter sphaeroides (strain ATCC 17023 / DSM 158 / JCM 6121 / CCUG 31486 / LMG 2827 / NBRC 12203 / NCIMB 8253 / ATH 2.4.1.) (Rhodobacter sphaeroides).